The following is a 140-amino-acid chain: NADH-quinone oxidoreductase subunit I (140 aa).

4Fe-4S ferredoxin-type domains lie at 42-71 (GSFT…VGSI) and 81-110 (ASYE…FNQE). Cysteine 51, cysteine 54, cysteine 57, cysteine 61, cysteine 90, cysteine 93, cysteine 96, and cysteine 100 together coordinate [4Fe-4S] cluster.

Belongs to the complex I 23 kDa subunit family. NDH-1 is composed of 14 different subunits. Subunits NuoA, H, J, K, L, M, N constitute the membrane sector of the complex. It depends on [4Fe-4S] cluster as a cofactor.

It localises to the cell membrane. It carries out the reaction a quinone + NADH + 5 H(+)(in) = a quinol + NAD(+) + 4 H(+)(out). NDH-1 shuttles electrons from NADH, via FMN and iron-sulfur (Fe-S) centers, to quinones in the respiratory chain. The immediate electron acceptor for the enzyme in this species is believed to be ubiquinone. Couples the redox reaction to proton translocation (for every two electrons transferred, four hydrogen ions are translocated across the cytoplasmic membrane), and thus conserves the redox energy in a proton gradient. This is NADH-quinone oxidoreductase subunit I from Carboxydothermus hydrogenoformans (strain ATCC BAA-161 / DSM 6008 / Z-2901).